Consider the following 512-residue polypeptide: Oxalate--CoA ligase (512 aa).

168–179 (HTSGTTGRPKVV) serves as a coordination point for ATP. Serine 283 and serine 284 each carry phosphoserine. The FACS motif lies at 381-429 (DRFFRTGDEGKLDKDGYVFITGRIKELVNRGGEKISPAEIDAVLMQHPD). The Microbody targeting signal motif lies at 510-512 (AKL).

Belongs to the ATP-dependent AMP-binding enzyme family.

The protein resides in the peroxisome matrix. Its subcellular location is the peroxisome membrane. The catalysed reaction is oxalate + ATP + CoA = oxalyl-CoA + AMP + diphosphate. Catalyzes the first step in a degradation pathway of oxalate to CO(2) to protect the cell against the harmful effects of oxalate derived from endogenous processes or an environmental sources. This chain is Oxalate--CoA ligase (pcs60), found in Schizosaccharomyces pombe (strain 972 / ATCC 24843) (Fission yeast).